Reading from the N-terminus, the 375-residue chain is Erythronate-4-phosphate dehydrogenase (375 aa).

Substrate contacts are provided by S45 and T66. NAD(+) is bound by residues D146, T175, 206 to 208 (ASR), and D232. R208 is an active-site residue. E237 is a catalytic residue. H254 functions as the Proton donor in the catalytic mechanism. G257 is a binding site for NAD(+). Residue Y258 coordinates substrate.

Belongs to the D-isomer specific 2-hydroxyacid dehydrogenase family. PdxB subfamily. As to quaternary structure, homodimer.

Its subcellular location is the cytoplasm. It catalyses the reaction 4-phospho-D-erythronate + NAD(+) = (R)-3-hydroxy-2-oxo-4-phosphooxybutanoate + NADH + H(+). The protein operates within cofactor biosynthesis; pyridoxine 5'-phosphate biosynthesis; pyridoxine 5'-phosphate from D-erythrose 4-phosphate: step 2/5. Its function is as follows. Catalyzes the oxidation of erythronate-4-phosphate to 3-hydroxy-2-oxo-4-phosphonooxybutanoate. The sequence is that of Erythronate-4-phosphate dehydrogenase from Proteus mirabilis (strain HI4320).